Here is a 40-residue protein sequence, read N- to C-terminus: Dolichyl-diphosphooligosaccharide--protein glycosyltransferase subunit 4 (40 aa).

Residues 1–4 are Lumenal-facing; the sequence is MISD. Residues 5–25 traverse the membrane as a helical segment; that stretch reads VQLAIFSNVLGVFLFLLVVAY. Over 26 to 40 the chain is Cytoplasmic; it reads HYINANTGKPSAKAK.

The protein belongs to the OST4 family. Component of the oligosaccharyltransferase (OST) complex.

The protein localises to the endoplasmic reticulum membrane. Functionally, subunit of the oligosaccharyl transferase (OST) complex that catalyzes the initial transfer of a defined glycan (Glc(3)Man(9)GlcNAc(2) in eukaryotes) from the lipid carrier dolichol-pyrophosphate to an asparagine residue within an Asn-X-Ser/Thr consensus motif in nascent polypeptide chains, the first step in protein N-glycosylation. N-glycosylation occurs cotranslationally and the complex associates with the Sec61 complex at the channel-forming translocon complex that mediates protein translocation across the endoplasmic reticulum (ER). All subunits are required for a maximal enzyme activity. The chain is Dolichyl-diphosphooligosaccharide--protein glycosyltransferase subunit 4 from Drosophila yakuba (Fruit fly).